A 269-amino-acid chain; its full sequence is Shikimate dehydrogenase (NADP(+)) (269 aa).

Shikimate-binding positions include 15–17 and threonine 62; that span reads SLS. Residue lysine 66 is the Proton acceptor of the active site. Residues asparagine 86 and aspartate 99 each coordinate shikimate. NADP(+)-binding positions include 123 to 127, 146 to 151, and leucine 213; these read GAGGA and NRTTAK. Tyrosine 215 is a shikimate binding site. Glycine 236 is a binding site for NADP(+).

This sequence belongs to the shikimate dehydrogenase family. As to quaternary structure, homodimer.

The enzyme catalyses shikimate + NADP(+) = 3-dehydroshikimate + NADPH + H(+). Its pathway is metabolic intermediate biosynthesis; chorismate biosynthesis; chorismate from D-erythrose 4-phosphate and phosphoenolpyruvate: step 4/7. In terms of biological role, involved in the biosynthesis of the chorismate, which leads to the biosynthesis of aromatic amino acids. Catalyzes the reversible NADPH linked reduction of 3-dehydroshikimate (DHSA) to yield shikimate (SA). The protein is Shikimate dehydrogenase (NADP(+)) of Methanocella arvoryzae (strain DSM 22066 / NBRC 105507 / MRE50).